An 875-amino-acid chain; its full sequence is uncharacterized protein (875 aa).

The segment at 83-149 (PFQPPPPQPF…QPPQPPPQQL (67 aa)) is disordered. Positions 101–147 (QQPPQPPPDQPQQPQPPQQPPQQPPQQQPQPPQPPQQPPQPPQPPPQ) are enriched in pro residues.

This is an uncharacterized protein from Orgyia pseudotsugata multicapsid polyhedrosis virus (OpMNPV).